Consider the following 74-residue polypeptide: Small ribosomal subunit protein bS21 (74 aa).

The protein belongs to the bacterial ribosomal protein bS21 family.

In Coxiella burnetii (strain Dugway 5J108-111), this protein is Small ribosomal subunit protein bS21.